The sequence spans 2481 residues: Serine/threonine-protein kinase TOR (2481 aa).

Positions 1–31 (MSTSSQSFVAGRPASMASPSQSHRFCGPSAT) are disordered. 8 HEAT repeats span residues 205 to 242 (VHVP…VIEK), 292 to 329 (SRYR…FLRD), 373 to 410 (HYLP…AMGS), 434 to 471 (DALD…SQAK), 569 to 607 (RLVE…FDDY), 608 to 645 (LAQA…KNPA), 737 to 775 (QYIP…STGY), and 781 to 819 (KEYP…LDPH). The segment at 823–847 (RNQQSLSGSHGEVPRGTGDSGQPIP) is disordered. HEAT repeat units follow at residues 866–904 (YYST…SMGL), 908–945 (PYLP…IVRQ), 952–992 (PELL…ALND), 996–1036 (TYLP…GTLD), 1037–1075 (EHMH…CVQV), and 1077–1114 (GHIS…ALGE). A disordered region spans residues 1179–1204 (DPFEEGTDRNHQVNDGRLRTAGEASQ). Residues 1184 to 1198 (GTDRNHQVNDGRLRT) show a composition bias toward basic and acidic residues. One can recognise an FAT domain in the interval 1309-1887 (LLGALAEKCR…MYPLLVACKS (579 aa)). 2 consecutive short sequence motifs (nuclear localization signal) follow at residues 1505 to 1512 (VRRAKYDE) and 2075 to 2080 (KQRPRK). In terms of domain architecture, PI3K/PI4K catalytic spans 2065-2378 (FSRQLVVITS…DEDPADIDLP (314 aa)). Residues 2071-2077 (VITSKQR) form a G-loop region. A catalytic loop region spans residues 2244 to 2252 (GLGDRHPSN). Positions 2264–2289 (HIDFGDCFEASMNREKFPEKVPFRLT) are activation loop. The interval 2354–2384 (NNNPNAPADVEPDEEDEDPADIDLPQPQRST) is disordered. Residues 2363–2374 (VEPDEEDEDPAD) are compositionally biased toward acidic residues. At S2424 the chain carries Phosphoserine. Residues 2449–2481 (HGLSVKVQVQKLINQATSHENLCQNYVGWCPFW) form the FATC domain.

The protein belongs to the PI3/PI4-kinase family. Interacts with RAPTOR1 and itself. Interacts with FKBP12 in a rapamycin-dependent manner. Binds to LST8-1. Hyperactivated upon interaction with cauliflower mosaic virus (CaMV) Tav protein. In terms of processing, activated by phosphorylation on Ser-2424 triggered by cauliflower mosaic virus P6 and auxin. In terms of tissue distribution, highly expressed in root meristems, shoot apical meristem (SAM) and floral buds.

Its subcellular location is the cytoplasm. It localises to the nucleus. It carries out the reaction L-seryl-[protein] + ATP = O-phospho-L-seryl-[protein] + ADP + H(+). It catalyses the reaction L-threonyl-[protein] + ATP = O-phospho-L-threonyl-[protein] + ADP + H(+). Almost insensitive to rapamycin. Strongly repressed by specific active site inhibitors (asTORis) such as AZD-8055, TORIN2 and WYE-132, and, to a lesser extent, by KU63794, WYE-354 and TORIN1, leading to impaired photoautotrophic growth and abnormally early meristematic cells differentiation. Repression by TORIN1 leads to impaired responses to auxin, including gravitropism. Combined treatment with rapamycin and active-site inhibitors (e.g. Torin1 and AZD-8055) results in synergistic inhibition of activity and plant growth. Inhibition by KU63794 leads to reduced auxin content in root tips. AZD-8055 treatment reduces abscisic acid (ABA) levels. In addition, inhibition by AZD-8055 leads to a strong reduction of watermelon mosaic virus (WMV) infection. Essential cell growth regulator that controls development from early embryo to seed production. Controls plant growth in environmental stress conditions. Acts through the phosphorylation of downstream effectors that are recruited by the binding partner RAPTOR. Acts by activating transcription, protein synthesis and ribosome biogenesis, and inhibiting mRNA degradation and autophagy. Can phosphorylate TAP46, a regulatory subunit of protein phosphatase 2A that modulates cell growth and survival. Involved in modulating the transition from heterotrophic to photoautotrophic growth by regulating the expression of chloroplast- and photosynthesis-associated genes. Essential for auxin signaling transduction, probably acting in polysomes to maintain the active ATPK1/S6K1 (and thus TIF3H1/eIF3h) phosphorylation status that is critical for translation reinitiation (e.g. uORF-mRNAs loading). Promotes abscisic acid (ABA) biosynthesis. Involved in the regulation of sugar-mediated (e.g. glucose and sucrose) glycolysis- and mitochondrial bioenergetics-dependent root growth promotion. Required for sugar (e.g. glucose) promotion of hypocotyl elongation in the dark, by activating the brassinosteroid pathway and stabilizing BZR1. The regulation of BZR1 degradation is dependent on autophagy. Regulates the expression, phosphorylation and ribosome association of MRFs (e.g. MRF1, MRF3 and MRF4), especially under energy-deficient conditions. Functionally, (Microbial infection) Binding to cauliflower mosaic virus (CaMV) Tav protein is critical for both translation reinitiation and viral fitness. When activated by CaMV P6, promotes CaMV translation by inhibiting cellular autophagy and suppressing both silencing and innate immunity, thus conferring sensitivity to P.syringae. In terms of biological role, (Microbial infection) Required during infection by some potyvirus such as Watermelon mosaic virus (WMV) but not for turnip mosaic virus (TuMV). In Arabidopsis thaliana (Mouse-ear cress), this protein is Serine/threonine-protein kinase TOR.